We begin with the raw amino-acid sequence, 198 residues long: Adenylyl-sulfate kinase (198 aa).

ATP is bound at residue 31–38 (GLSGAGKS). Ser-105 functions as the Phosphoserine intermediate in the catalytic mechanism.

It belongs to the APS kinase family.

It carries out the reaction adenosine 5'-phosphosulfate + ATP = 3'-phosphoadenylyl sulfate + ADP + H(+). The protein operates within sulfur metabolism; hydrogen sulfide biosynthesis; sulfite from sulfate: step 2/3. Catalyzes the synthesis of activated sulfate. The sequence is that of Adenylyl-sulfate kinase from Shewanella amazonensis (strain ATCC BAA-1098 / SB2B).